The following is a 147-amino-acid chain: NADH-quinone oxidoreductase subunit A (147 aa).

Transmembrane regions (helical) follow at residues 11-31, 68-88, and 93-113; these read IWPL…VMAL, LIAV…AWAV, and LGWP…AALA.

This sequence belongs to the complex I subunit 3 family. NDH-1 is composed of 14 different subunits. Subunits NuoA, H, J, K, L, M, N constitute the membrane sector of the complex.

The protein resides in the cell inner membrane. The enzyme catalyses a quinone + NADH + 5 H(+)(in) = a quinol + NAD(+) + 4 H(+)(out). Its function is as follows. NDH-1 shuttles electrons from NADH, via FMN and iron-sulfur (Fe-S) centers, to quinones in the respiratory chain. The immediate electron acceptor for the enzyme in this species is believed to be ubiquinone. Couples the redox reaction to proton translocation (for every two electrons transferred, four hydrogen ions are translocated across the cytoplasmic membrane), and thus conserves the redox energy in a proton gradient. This Nitrosospira multiformis (strain ATCC 25196 / NCIMB 11849 / C 71) protein is NADH-quinone oxidoreductase subunit A.